Consider the following 220-residue polypeptide: UPF0502 protein Pnap_3223 (220 aa).

Belongs to the UPF0502 family.

The sequence is that of UPF0502 protein Pnap_3223 from Polaromonas naphthalenivorans (strain CJ2).